The sequence spans 273 residues: Odontogenic ameloblast-associated protein (273 aa).

The N-terminal stretch at 1–15 (MKIIILLGLIGASSS) is a signal peptide. Residues 100–124 (QGGQAGQPDLSQQQTPPQTQQSASP) form a disordered region. Over residues 110 to 121 (SQQQTPPQTQQS) the composition is skewed to low complexity. O-linked (GalNAc...) threonine glycans are attached at residues T114 and T118. Residues 125-127 (MSY) form an interaction with ARHGEF5 region. 7 O-linked (GalNAc...) threonine glycosylation sites follow: T159, T240, T241, T247, T252, T258, and T267. A compositionally biased stretch (polar residues) spans 240-252 (TTSPKPSTDNFFT). Positions 240–273 (TTSPKPSTDNFFTSGIDPTIAPEQKVKTDSLREP) are disordered. Residues 263–273 (QKVKTDSLREP) show a composition bias toward basic and acidic residues.

This sequence belongs to the ODAM family. Interacts (via C-terminus) with ARHGEF5. Post-translationally, O-glycosylated. In terms of tissue distribution, highly expressed in tooth-associated epithelia. Predominantly expressed in mandible.

It is found in the secreted. It localises to the cytoplasm. The protein resides in the nucleus. Functionally, tooth-associated epithelia protein that probably plays a role in odontogenesis, the complex process that results in the initiation and generation of the tooth. May be incorporated in the enamel matrix at the end of mineralization process. Involved in the induction of RHOA activity via interaction with ARHGEF and expression of downstream factors such as ROCK. Plays a role in attachment of the junctional epithelium to the tooth surface. The polypeptide is Odontogenic ameloblast-associated protein (Odam) (Mus musculus (Mouse)).